Here is a 415-residue protein sequence, read N- to C-terminus: Serine/threonine transporter SstT (415 aa).

A run of 8 helical transmembrane segments spans residues 15 to 35 (GSLVKQILVGLIAGILLAWLA), 45 to 65 (LGTLFVGALKAVAPVLVWILV), 85 to 105 (ILYILGTFFAALVAVAGSFIF), 142 to 162 (ALLNGNYIGILAWAIGLGIAL), 193 to 213 (VGIFGLVSATIAETGFNALLG), 217 to 237 (LLVVLLSCMLVMALVVNPLIV), 301 to 321 (GAAVTIPVLTLAAVNTLGIPV), and 331 to 351 (VVSAICACGASGVAGGSLLLI).

Belongs to the dicarboxylate/amino acid:cation symporter (DAACS) (TC 2.A.23) family.

It is found in the cell inner membrane. It catalyses the reaction L-serine(in) + Na(+)(in) = L-serine(out) + Na(+)(out). The catalysed reaction is L-threonine(in) + Na(+)(in) = L-threonine(out) + Na(+)(out). Involved in the import of serine and threonine into the cell, with the concomitant import of sodium (symport system). The sequence is that of Serine/threonine transporter SstT from Photorhabdus laumondii subsp. laumondii (strain DSM 15139 / CIP 105565 / TT01) (Photorhabdus luminescens subsp. laumondii).